A 218-amino-acid chain; its full sequence is Protein-L-isoaspartate O-methyltransferase (218 aa).

Residue S60 is part of the active site.

This sequence belongs to the methyltransferase superfamily. L-isoaspartyl/D-aspartyl protein methyltransferase family.

The protein resides in the cytoplasm. It carries out the reaction [protein]-L-isoaspartate + S-adenosyl-L-methionine = [protein]-L-isoaspartate alpha-methyl ester + S-adenosyl-L-homocysteine. In terms of biological role, catalyzes the methyl esterification of L-isoaspartyl residues in peptides and proteins that result from spontaneous decomposition of normal L-aspartyl and L-asparaginyl residues. It plays a role in the repair and/or degradation of damaged proteins. In Roseiflexus castenholzii (strain DSM 13941 / HLO8), this protein is Protein-L-isoaspartate O-methyltransferase.